Reading from the N-terminus, the 185-residue chain is MINEIKKEAQERMGKTLEALGHAFAKIRTGRAHPSILDSVMVSYYGADTPLRQVANVTVEDSRTLALAVFDKSMIQAVEKAIMTSDLGLNPATAGTTIRVPMPALTEETRKGYTKQARAEAEQARVSVRNIRRDALAQLKDLQKEKEISEDDERRAGDDVQKLTDKFIGEIEKALEAKEADLMAV.

Belongs to the RRF family.

The protein resides in the cytoplasm. Responsible for the release of ribosomes from messenger RNA at the termination of protein biosynthesis. May increase the efficiency of translation by recycling ribosomes from one round of translation to another. In Pseudomonas paraeruginosa (strain DSM 24068 / PA7) (Pseudomonas aeruginosa (strain PA7)), this protein is Ribosome-recycling factor.